We begin with the raw amino-acid sequence, 209 residues long: 3-demethoxyubiquinol 3-hydroxylase (209 aa).

Residues E58, E88, H91, E140, E172, and H175 each contribute to the Fe cation site.

It belongs to the COQ7 family. It depends on Fe cation as a cofactor.

It is found in the cell membrane. It catalyses the reaction a 5-methoxy-2-methyl-3-(all-trans-polyprenyl)benzene-1,4-diol + AH2 + O2 = a 3-demethylubiquinol + A + H2O. The protein operates within cofactor biosynthesis; ubiquinone biosynthesis. Its function is as follows. Catalyzes the hydroxylation of 2-nonaprenyl-3-methyl-6-methoxy-1,4-benzoquinol during ubiquinone biosynthesis. In Polynucleobacter necessarius subsp. necessarius (strain STIR1), this protein is 3-demethoxyubiquinol 3-hydroxylase.